A 209-amino-acid chain; its full sequence is Chromophore lyase CpcT/CpeT 1 (209 aa).

It belongs to the CpcT/CpeT biliprotein lyase family.

In terms of biological role, covalently attaches a chromophore to Cys residue(s) of phycobiliproteins. The polypeptide is Chromophore lyase CpcT/CpeT 1 (Trichodesmium erythraeum (strain IMS101)).